Here is a 118-residue protein sequence, read N- to C-terminus: Sporulation protein YjcA (118 aa).

3 consecutive transmembrane segments (helical) span residues 8 to 28, 62 to 82, and 92 to 112; these read IVLL…DTIM, FIGE…GFLI, and AQWL…ETLV.

Belongs to the UPF0713 family.

The protein localises to the cell membrane. Its function is as follows. Involved in sporulation. The sequence is that of Sporulation protein YjcA (yjcA) from Bacillus subtilis (strain 168).